The following is a 189-amino-acid chain: Elongation factor P (189 aa).

Belongs to the elongation factor P family.

It is found in the cytoplasm. It functions in the pathway protein biosynthesis; polypeptide chain elongation. In terms of biological role, involved in peptide bond synthesis. Stimulates efficient translation and peptide-bond synthesis on native or reconstituted 70S ribosomes in vitro. Probably functions indirectly by altering the affinity of the ribosome for aminoacyl-tRNA, thus increasing their reactivity as acceptors for peptidyl transferase. The sequence is that of Elongation factor P from Pseudomonas putida (strain GB-1).